Consider the following 503-residue polypeptide: Glutamate/gamma-aminobutyrate antiporter (503 aa).

Leu33 to Gly43 serves as a coordination point for L-glutamate. 7 helical membrane passes run Leu35–Ala55, Phe153–Ile173, Val194–Ala214, Ile232–Val252, Leu366–Ile386, Ile407–Pro427, and Met440–His460.

The protein belongs to the amino acid-polyamine-organocation (APC) superfamily. Glutamate:GABA antiporter (GGA) (TC 2.A.3.7) family.

It is found in the cell membrane. It carries out the reaction 4-aminobutanoate(in) + L-glutamate(out) = 4-aminobutanoate(out) + L-glutamate(in). Functionally, involved in glutaminase-dependent acid resistance. Exchanges extracellular glutamate (Glu) for intracellular gamma-aminobutyric acid (GABA) under acidic conditions. This chain is Glutamate/gamma-aminobutyrate antiporter (gadC), found in Lactococcus lactis subsp. lactis (strain IL1403) (Streptococcus lactis).